The primary structure comprises 388 residues: Phosphoglycerate kinase (388 aa).

Residues 24–26 (DLN), R37, 56–59 (RGGR), R117, and R165 contribute to the substrate site. The interval 26–136 (NVPLDSDGEQ…RRPRNVQGRR (111 aa)) is disordered. Basic and acidic residues predominate over residues 34 to 55 (EQGRITDPGPDHRVGADVERTG). Residues 102-136 (GGHRRPGPRRGVDRRRRPAAGKHPVRRPRNVQGRR) show a composition bias toward basic residues. ATP contacts are provided by residues K215, G303, E334, and 363–366 (GGDS).

The protein belongs to the phosphoglycerate kinase family. In terms of assembly, monomer.

The protein resides in the cytoplasm. It carries out the reaction (2R)-3-phosphoglycerate + ATP = (2R)-3-phospho-glyceroyl phosphate + ADP. It participates in carbohydrate degradation; glycolysis; pyruvate from D-glyceraldehyde 3-phosphate: step 2/5. This Mycobacterium avium protein is Phosphoglycerate kinase (pgk).